A 119-amino-acid polypeptide reads, in one-letter code: Host cell factor C1 regulator 1 (119 aa).

Residues methionine 1–proline 34 form a disordered region. The tract at residues aspartate 57 to tyrosine 60 is interaction with HCFC1. Positions isoleucine 91–leucine 100 match the Nuclear export signal motif.

In terms of assembly, interacts with HCFC1.

It is found in the cytoplasm. The protein localises to the nucleus. Regulates HCFC1 activity by modulating its subcellular localization. Overexpression of HCFC1R1 leads to accumulation of HCFC1 in the cytoplasm. HCFC1R1-mediated export may provide the pool of cytoplasmic HCFC1 required for import of virion-derived VP16 into the nucleus. This is Host cell factor C1 regulator 1 (HCFC1R1) from Bos taurus (Bovine).